A 242-amino-acid polypeptide reads, in one-letter code: Biosynthetic peptidoglycan transglycosylase (242 aa).

The chain crosses the membrane as a helical span at residues 19-39; the sequence is LMVVLAVFWGGGIALFSVAPV.

The protein belongs to the glycosyltransferase 51 family.

It is found in the cell inner membrane. It carries out the reaction [GlcNAc-(1-&gt;4)-Mur2Ac(oyl-L-Ala-gamma-D-Glu-L-Lys-D-Ala-D-Ala)](n)-di-trans,octa-cis-undecaprenyl diphosphate + beta-D-GlcNAc-(1-&gt;4)-Mur2Ac(oyl-L-Ala-gamma-D-Glu-L-Lys-D-Ala-D-Ala)-di-trans,octa-cis-undecaprenyl diphosphate = [GlcNAc-(1-&gt;4)-Mur2Ac(oyl-L-Ala-gamma-D-Glu-L-Lys-D-Ala-D-Ala)](n+1)-di-trans,octa-cis-undecaprenyl diphosphate + di-trans,octa-cis-undecaprenyl diphosphate + H(+). Its pathway is cell wall biogenesis; peptidoglycan biosynthesis. Peptidoglycan polymerase that catalyzes glycan chain elongation from lipid-linked precursors. The polypeptide is Biosynthetic peptidoglycan transglycosylase (Escherichia coli (strain ATCC 8739 / DSM 1576 / NBRC 3972 / NCIMB 8545 / WDCM 00012 / Crooks)).